Here is a 302-residue protein sequence, read N- to C-terminus: Light-independent protochlorophyllide reductase iron-sulfur ATP-binding protein (302 aa).

Over residues 1-10 (MSTATISPSQ) the composition is skewed to polar residues. Positions 1-21 (MSTATISPSQIGRGARPDGEG) are disordered. ATP-binding positions include 46 to 51 (GIGKST) and Lys-75. Ser-50 serves as a coordination point for Mg(2+). Residues Cys-131 and Cys-165 each contribute to the [4Fe-4S] cluster site. ATP-binding positions include 216–217 (NR) and 240–242 (PAL).

The protein belongs to the NifH/BchL/ChlL family. In terms of assembly, homodimer. Protochlorophyllide reductase is composed of three subunits; BchL, BchN and BchB. [4Fe-4S] cluster is required as a cofactor.

The enzyme catalyses chlorophyllide a + oxidized 2[4Fe-4S]-[ferredoxin] + 2 ADP + 2 phosphate = protochlorophyllide a + reduced 2[4Fe-4S]-[ferredoxin] + 2 ATP + 2 H2O. It participates in porphyrin-containing compound metabolism; bacteriochlorophyll biosynthesis (light-independent). Component of the dark-operative protochlorophyllide reductase (DPOR) that uses Mg-ATP and reduced ferredoxin to reduce ring D of protochlorophyllide (Pchlide) to form chlorophyllide a (Chlide). This reaction is light-independent. The L component serves as a unique electron donor to the NB-component of the complex, and binds Mg-ATP. The protein is Light-independent protochlorophyllide reductase iron-sulfur ATP-binding protein of Rubrivivax gelatinosus (strain NBRC 100245 / IL144).